The following is a 218-amino-acid chain: GTP cyclohydrolase 1 (218 aa).

Cysteine 109, histidine 112, and cysteine 180 together coordinate Zn(2+).

This sequence belongs to the GTP cyclohydrolase I family. In terms of assembly, toroid-shaped homodecamer, composed of two pentamers of five dimers.

The enzyme catalyses GTP + H2O = 7,8-dihydroneopterin 3'-triphosphate + formate + H(+). The protein operates within cofactor biosynthesis; 7,8-dihydroneopterin triphosphate biosynthesis; 7,8-dihydroneopterin triphosphate from GTP: step 1/1. The sequence is that of GTP cyclohydrolase 1 from Aeromonas salmonicida (strain A449).